A 349-amino-acid chain; its full sequence is Aspartate carbamoyltransferase catalytic subunit (349 aa).

Arg-59 and Thr-60 together coordinate carbamoyl phosphate. Lys-87 contacts L-aspartate. Carbamoyl phosphate contacts are provided by Arg-109, His-142, and Gln-145. L-aspartate is bound by residues Arg-182 and Arg-253. Carbamoyl phosphate-binding residues include Gly-294 and Pro-295.

Belongs to the aspartate/ornithine carbamoyltransferase superfamily. ATCase family. As to quaternary structure, heterododecamer (2C3:3R2) of six catalytic PyrB chains organized as two trimers (C3), and six regulatory PyrI chains organized as three dimers (R2).

It catalyses the reaction carbamoyl phosphate + L-aspartate = N-carbamoyl-L-aspartate + phosphate + H(+). The protein operates within pyrimidine metabolism; UMP biosynthesis via de novo pathway; (S)-dihydroorotate from bicarbonate: step 2/3. Functionally, catalyzes the condensation of carbamoyl phosphate and aspartate to form carbamoyl aspartate and inorganic phosphate, the committed step in the de novo pyrimidine nucleotide biosynthesis pathway. The sequence is that of Aspartate carbamoyltransferase catalytic subunit from Synechococcus sp. (strain CC9605).